A 572-amino-acid chain; its full sequence is Phosphoenolpyruvate-protein phosphotransferase (572 aa).

His191 acts as the Tele-phosphohistidine intermediate in catalysis. The phosphoenolpyruvate site is built by Arg298 and Arg334. Positions 433 and 457 each coordinate Mg(2+). Residues 456–457 (ND) and Arg467 each bind phosphoenolpyruvate. Cys504 acts as the Proton donor in catalysis.

This sequence belongs to the PEP-utilizing enzyme family. As to quaternary structure, homodimer. Mg(2+) is required as a cofactor.

It is found in the cytoplasm. The catalysed reaction is L-histidyl-[protein] + phosphoenolpyruvate = N(pros)-phospho-L-histidyl-[protein] + pyruvate. General (non sugar-specific) component of the phosphoenolpyruvate-dependent sugar phosphotransferase system (sugar PTS). This major carbohydrate active-transport system catalyzes the phosphorylation of incoming sugar substrates concomitantly with their translocation across the cell membrane. Enzyme I transfers the phosphoryl group from phosphoenolpyruvate (PEP) to the phosphoryl carrier protein (HPr). This is Phosphoenolpyruvate-protein phosphotransferase (ptsI) from Staphylococcus epidermidis (strain ATCC 35984 / DSM 28319 / BCRC 17069 / CCUG 31568 / BM 3577 / RP62A).